Consider the following 328-residue polypeptide: Eukaryotic translation initiation factor 3 subunit I (328 aa).

5 WD repeats span residues 8 to 47 (GHER…RLGT), 50 to 91 (GHQG…GTIP), 148 to 187 (SIQT…ELNS), 190 to 229 (DHTG…CLKT), and 287 to 328 (GHFG…FVFE).

This sequence belongs to the eIF-3 subunit I family. In terms of assembly, component of the eukaryotic translation initiation factor 3 (eIF-3) complex.

It is found in the cytoplasm. Its function is as follows. Component of the eukaryotic translation initiation factor 3 (eIF-3) complex, which is involved in protein synthesis of a specialized repertoire of mRNAs and, together with other initiation factors, stimulates binding of mRNA and methionyl-tRNAi to the 40S ribosome. The eIF-3 complex specifically targets and initiates translation of a subset of mRNAs involved in cell proliferation. The polypeptide is Eukaryotic translation initiation factor 3 subunit I (Culex quinquefasciatus (Southern house mosquito)).